Here is a 251-residue protein sequence, read N- to C-terminus: N-acetylmuramoyl-L-alanine amidase CwlA (251 aa).

The N-terminal stretch at 1-37 is a signal peptide; the sequence is MEIKQMLVPVSRYSVLCPYEMNPTEITFHNTYNDAPA. The 103-residue stretch at 38 to 140 folds into the N-acetylmuramoyl-L-alanine amidase domain; it reads INERNNVANN…QERNGKYCPH (103 aa).

This sequence belongs to the N-acetylmuramoyl-L-alanine amidase 2 family.

It is found in the secreted. It catalyses the reaction Hydrolyzes the link between N-acetylmuramoyl residues and L-amino acid residues in certain cell-wall glycopeptides.. Its function is as follows. Autolysins are involved in some important biological processes such as cell separation, cell-wall turnover, competence for genetic transformation, formation of the flagella and sporulation. This Bacillus sp protein is N-acetylmuramoyl-L-alanine amidase CwlA (cwlA).